The primary structure comprises 1581 residues: Laminin subunit gamma-3 (1581 aa).

Residues 1 to 28 form the signal peptide; it reads MAVSRVLSLLATVASMALVIQETHFAAG. The Laminin N-terminal domain maps to 40–279; the sequence is RAQRCLPEFE…AVSDFSVGGR (240 aa). N-linked (GlcNAc...) asparagine glycosylation occurs at N128. Disulfide bonds link C280–C289, C282–C299, C301–C310, C313–C333, C336–C345, C338–C361, C364–C373, C376–C389, C392–C404, C394–C410, C412–C421, C424–C436, C439–C450, C441–C457, C459–C468, and C471–C486. Laminin EGF-like domains lie at 280–335, 336–391, 392–438, and 439–488; these read CKCN…ECLP, CNCS…PCQP, CDCH…GCRP, and CACN…GCSS. N-linked (GlcNAc...) asparagine glycosylation occurs at N304. The N-linked (GlcNAc...) asparagine glycan is linked to N337. In terms of domain architecture, Laminin EGF-like 5; first part spans 489–498; that stretch reads CFCYGHSKVC. The Laminin IV type A domain maps to 508 to 684; sequence HIRSDFRHGA…LAPPASWVET (177 aa). The N-linked (GlcNAc...) asparagine glycan is linked to N640. The region spanning 685–718 is the Laminin EGF-like 5; second part domain; the sequence is CLCPQGYTGQFCEFCALGYKREIPHGGPYANCIP. Intrachain disulfides connect C719/C727, C721/C734, C736/C745, C748/C764, C767/C775, C769/C786, C789/C798, C801/C819, C822/C836, C824/C843, C846/C855, C858/C875, C878/C891, C880/C898, C900/C909, C912/C925, C928/C940, C930/C947, C949/C958, C961/C973, C976/C988, C978/C994, C996/C1005, and C1008/C1021. 6 consecutive Laminin EGF-like domains span residues 719–766, 767–821, 822–877, 878–927, 928–975, and 976–1024; these read CTCN…DCQP, CPCP…PCRR, CQCS…KCAP, CSCD…GCQS, CKCH…GCRD, and CRCS…CQEC. N849 is a glycosylation site (N-linked (GlcNAc...) asparagine). An N-linked (GlcNAc...) asparagine glycan is attached at N991. A domain II and I region spans residues 1025–1581; the sequence is PTCYALVKEE…LSSLPENCAS (557 aa). Coiled-coil stretches lie at residues 1029–1046 and 1112–1153; these read ALVK…MLME and VHCA…LASL. N-linked (GlcNAc...) asparagine glycosylation is found at N1162 and N1196. Residues 1208–1231 are a coiled coil; it reads RVASEAQQELEDRYQEVQAAQTAL. A glycan (N-linked (GlcNAc...) asparagine) is linked at N1320. Residues 1382 to 1413 form a disordered region; that stretch reads KRKTKQAERMLGNAASLSSSTKKKSKEAELMS. Coiled-coil stretches lie at residues 1438–1468 and 1510–1575; these read ASQT…AKQV and AQTL…LSSL. Residue N1514 is glycosylated (N-linked (GlcNAc...) asparagine).

As to quaternary structure, laminin is a complex glycoprotein, consisting of three different polypeptide chains (alpha, beta, gamma), which are bound to each other by disulfide bonds into a cross-shaped molecule comprising one long and three short arms with globules at each end. Gamma-3 is a subunit of laminin-12 (laminin-213), laminin-14 (laminin-423) and laminin-15 (laminin-523). As to expression, strongly expressed in capillaries and arterioles of kidney as well as in interstitial Leydig cells of testis.

The protein localises to the secreted. It localises to the extracellular space. Its subcellular location is the extracellular matrix. The protein resides in the basement membrane. Functionally, binding to cells via a high affinity receptor, laminin is thought to mediate the attachment, migration and organization of cells into tissues during embryonic development by interacting with other extracellular matrix components. This Mus musculus (Mouse) protein is Laminin subunit gamma-3 (Lamc3).